The primary structure comprises 308 residues: Uridine diphosphate glucose pyrophosphatase NUDT22 (308 aa).

Phe-56, Tyr-86, Arg-138, Ala-143, Asp-150, His-155, and Glu-157 together coordinate substrate. The region spanning 117–284 (ADPLGVGAAL…KGAILLYNRH (168 aa)) is the Nudix hydrolase domain. Residues 174–195 (GLLVVRELFSSVLQEICDEVNL) carry the Nudix box motif. Mg(2+) contacts are provided by Glu-188 and Glu-192. Residue Ser-273 coordinates substrate.

It belongs to the Nudix hydrolase family. The cofactor is Mg(2+).

The catalysed reaction is UDP-sugar + H2O = UMP + alpha-D-aldose 1-phosphate.. In terms of biological role, hydrolyzes UDP-glucose to glucose 1-phosphate and UMP and UDP-galactose to galactose 1-phosphate and UMP. Preferred substrate is UDP-glucose. In Mus musculus (Mouse), this protein is Uridine diphosphate glucose pyrophosphatase NUDT22 (Nudt22).